The following is a 278-amino-acid chain: Large ribosomal subunit protein uL2 (278 aa).

Residues 201–278 (HGNINDGKAG…IMRSRHQKKK (78 aa)) are disordered. The span at 210–221 (GRSRWRGKRPHV) shows a compositional bias: basic residues.

This sequence belongs to the universal ribosomal protein uL2 family. In terms of assembly, part of the 50S ribosomal subunit. Forms a bridge to the 30S subunit in the 70S ribosome.

Its function is as follows. One of the primary rRNA binding proteins. Required for association of the 30S and 50S subunits to form the 70S ribosome, for tRNA binding and peptide bond formation. It has been suggested to have peptidyltransferase activity; this is somewhat controversial. Makes several contacts with the 16S rRNA in the 70S ribosome. In Allorhizobium ampelinum (strain ATCC BAA-846 / DSM 112012 / S4) (Agrobacterium vitis (strain S4)), this protein is Large ribosomal subunit protein uL2.